Reading from the N-terminus, the 366-residue chain is 2-aminoethylphosphonate--pyruvate transaminase (366 aa).

Lys192 is subject to N6-(pyridoxal phosphate)lysine.

It belongs to the class-V pyridoxal-phosphate-dependent aminotransferase family. PhnW subfamily. Homodimer. It depends on pyridoxal 5'-phosphate as a cofactor.

The enzyme catalyses (2-aminoethyl)phosphonate + pyruvate = phosphonoacetaldehyde + L-alanine. Its function is as follows. Involved in phosphonate degradation. This is 2-aminoethylphosphonate--pyruvate transaminase (phnW) from Lysinibacillus sphaericus (strain C3-41).